The chain runs to 38 residues: Alpha-2-macroglobulin homolog (38 aa).

The segment at residues 27–30 is a cross-link (isoglutamyl cysteine thioester (Cys-Gln)); that stretch reads CGEQ.

This sequence belongs to the protease inhibitor I39 (alpha-2-macroglobulin) family. Homodimer; disulfide-linked. Hemolymph.

Its subcellular location is the secreted. Is able to inhibit all four classes of proteinases by a unique 'trapping' mechanism. This protein has a peptide stretch, called the 'bait region' which contains specific cleavage sites for different proteinases. When a proteinase cleaves the bait region, a conformational change is induced in the protein which traps the proteinase. The entrapped enzyme remains active against low molecular weight substrates (activity against high molecular weight substrates is greatly reduced). Following cleavage in the bait region a thioester bond is hydrolyzed and mediates the covalent binding of the protein to the proteinase. The polypeptide is Alpha-2-macroglobulin homolog (Homarus americanus (American lobster)).